Here is a 320-residue protein sequence, read N- to C-terminus: Probable NAD(P)H-dependent D-xylose reductase xyl1 (320 aa).

Tyrosine 50 (proton donor) is an active-site residue. Histidine 112 provides a ligand contact to substrate. NAD(+) is bound by residues 167 to 168 (SN), 216 to 225 (SSFGPLSFLE), and 272 to 282 (KSNNPTRLSQN).

The protein belongs to the aldo/keto reductase family.

The catalysed reaction is xylitol + NAD(+) = D-xylose + NADH + H(+). It carries out the reaction xylitol + NADP(+) = D-xylose + NADPH + H(+). The protein operates within carbohydrate metabolism; D-xylose degradation. Its function is as follows. Catalyzes the initial reaction in the xylose utilization pathway by reducing D-xylose into xylitol. Xylose is a major component of hemicelluloses such as xylan. Most fungi utilize D-xylose via three enzymatic reactions, xylose reductase (XR), xylitol dehydrogenase (XDH), and xylulokinase, to form xylulose 5-phosphate, which enters pentose phosphate pathway. The protein is Probable NAD(P)H-dependent D-xylose reductase xyl1 (xyl1) of Aspergillus terreus (strain NIH 2624 / FGSC A1156).